An 88-amino-acid polypeptide reads, in one-letter code: Protein transport protein Sec61 subunit beta (88 aa).

A disordered region spans residues 1–41; that stretch reads MDSSVPGGQRTLQKRRNAQLQKEKKANQTPASPRQAGFGGS. Residues 1–60 are Cytoplasmic-facing; the sequence is MDSSVPGGQRTLQKRRNAQLQKEKKANQTPASPRQAGFGGSSSSILKLYTDEANGLRVDP. A helical membrane pass occupies residues 61-81; sequence LVVLFLAVAFVFSVVALHVVA.

This sequence belongs to the SEC61-beta family. As to quaternary structure, heterotrimeric complex composed of SEC61, SEB1 and SSS1.

The protein resides in the endoplasmic reticulum membrane. Necessary for protein translocation in the endoplasmic reticulum. The polypeptide is Protein transport protein Sec61 subunit beta (SBH1) (Kluyveromyces lactis (strain ATCC 8585 / CBS 2359 / DSM 70799 / NBRC 1267 / NRRL Y-1140 / WM37) (Yeast)).